The chain runs to 290 residues: Forkhead box protein O3B (290 aa).

2 disordered regions span residues 1 to 30 (METD…TEEG) and 44 to 239 (AAAA…SSRR). Composition is skewed to low complexity over residues 44–59 (AAAA…RGVH) and 75–91 (RTPA…EAPA). At threonine 117 the chain carries Phosphothreonine; by PKB/AKT1. Acidic residues predominate over residues 142 to 153 (IPEEEDDEDDED). The segment at residues 242-290 (WGNLSYADLITRAIESSPDRRLTLSQIYEWMVSCVPYFKDKGNSNSSAG) is a DNA-binding region (fork-head).

The protein resides in the cytoplasm. It localises to the cytosol. In terms of biological role, transcription factor. The sequence is that of Forkhead box protein O3B from Homo sapiens (Human).